We begin with the raw amino-acid sequence, 474 residues long: Trigger factor (474 aa).

In terms of domain architecture, PPIase FKBP-type spans 174–261; sequence GDIAVVSFKG…LKDLKEKELP (88 aa). Residues 435–474 form a disordered region; it reads VKEKTTKTSKATKTSKTTKATKTASKTTKTTKTQNKKEKK. The segment covering 442-467 has biased composition (low complexity); it reads TSKATKTSKTTKATKTASKTTKTTKT.

It belongs to the FKBP-type PPIase family. Tig subfamily.

The protein resides in the cytoplasm. It carries out the reaction [protein]-peptidylproline (omega=180) = [protein]-peptidylproline (omega=0). Involved in protein export. Acts as a chaperone by maintaining the newly synthesized protein in an open conformation. Functions as a peptidyl-prolyl cis-trans isomerase. The polypeptide is Trigger factor (Prochlorococcus marinus (strain AS9601)).